The sequence spans 81 residues: ATP synthase subunit c (81 aa).

2 consecutive transmembrane segments (helical) span residues 6 to 26 (ASASVIAAALAVGLAAIGPGI) and 57 to 77 (LAFMESLTIYGLVISLVLLFA).

The protein belongs to the ATPase C chain family. As to quaternary structure, F-type ATPases have 2 components, F(1) - the catalytic core - and F(0) - the membrane proton channel. F(1) has five subunits: alpha(3), beta(3), gamma(1), delta(1), epsilon(1). F(0) has four main subunits: a(1), b(1), b'(1) and c(10-14). The alpha and beta chains form an alternating ring which encloses part of the gamma chain. F(1) is attached to F(0) by a central stalk formed by the gamma and epsilon chains, while a peripheral stalk is formed by the delta, b and b' chains.

It is found in the cellular thylakoid membrane. Its function is as follows. F(1)F(0) ATP synthase produces ATP from ADP in the presence of a proton or sodium gradient. F-type ATPases consist of two structural domains, F(1) containing the extramembraneous catalytic core and F(0) containing the membrane proton channel, linked together by a central stalk and a peripheral stalk. During catalysis, ATP synthesis in the catalytic domain of F(1) is coupled via a rotary mechanism of the central stalk subunits to proton translocation. Key component of the F(0) channel; it plays a direct role in translocation across the membrane. A homomeric c-ring of between 10-14 subunits forms the central stalk rotor element with the F(1) delta and epsilon subunits. The protein is ATP synthase subunit c of Gloeothece citriformis (strain PCC 7424) (Cyanothece sp. (strain PCC 7424)).